A 79-amino-acid chain; its full sequence is Beta-defensin 15 (79 aa).

Positions 1-20 are cleaved as a signal peptide; that stretch reads MKTFLFLFAVLFFLDPAKNA. 3 disulfide bridges follow: Cys26/Cys53, Cys33/Cys47, and Cys37/Cys54.

The protein belongs to the beta-defensin family. As to expression, expressed in testis and to a lesser extent in epididymis (caput, corpus and cauda). Also weakly expressed in kidneys and colon.

The protein localises to the secreted. Has antibacterial activity. In Mus musculus (Mouse), this protein is Beta-defensin 15 (Defb15).